The following is a 138-amino-acid chain: Ribosome maturation factor RimP (138 aa).

It belongs to the RimP family.

It localises to the cytoplasm. In terms of biological role, required for maturation of 30S ribosomal subunits. This chain is Ribosome maturation factor RimP, found in Campylobacter curvus (strain 525.92).